A 1226-amino-acid chain; its full sequence is Polyamine-transporting ATPase 13A3 (1226 aa).

Residues 1–28 are Cytoplasmic-facing; sequence MDREERKTINQGQEDEMEIYGYNLSRWK. Residues 29–49 lie within the membrane without spanning it; it reads LAIVSLGVICSGGFLLLLLYW. Residues 50-205 lie on the Cytoplasmic side of the membrane; the sequence is MPEWRVKATC…IAVKVPSVFK (156 aa). Serine 98 is subject to Phosphoserine. A helical transmembrane segment spans residues 206-226; sequence LLIKEVLNPFYIFQLFSVILW. The Lumenal segment spans residues 227-232; that stretch reads STDEYY. A helical transmembrane segment spans residues 233–253; sequence YYALAIVVMSIVSIVSSLYSI. Topologically, residues 254-409 are cytoplasmic; that stretch reads RKQYVMLHDM…KPTDFKLYRD (156 aa). The helical transmembrane segment at 410 to 430 threads the bilayer; that stretch reads AYLFLLCLVAVAGIGFIYTII. Topologically, residues 431 to 448 are lumenal; it reads NSILNEVQVGVIIIESLD. The helical transmembrane segment at 449-469 threads the bilayer; it reads IITITVPPALPAAMTAGIVYA. Residues 470–940 lie on the Cytoplasmic side of the membrane; it reads QRRLKKIGIF…ALITSFCVFK (471 aa). Aspartate 498 functions as the 4-aspartylphosphate intermediate in the catalytic mechanism. Residues aspartate 498 and threonine 500 each coordinate Mg(2+). ATP is bound by residues 498–500, phenylalanine 628, arginine 684, and aspartate 750; that span reads DKT. Serine 817 carries the phosphoserine modification. Aspartate 883 and aspartate 887 together coordinate Mg(2+). 883 to 887 contributes to the ATP binding site; the sequence is DGAND. Residues 941–961 traverse the membrane as a helical segment; sequence FMALYSIIQYFSVTLLYSILS. A topological domain (lumenal) is located at residue asparagine 962. Residues 963–983 form a helical membrane-spanning segment; the sequence is LGDFQFLFIDLAIILVVVFTM. At 984–999 the chain is on the cytoplasmic side; it reads SLNPAWKELVAQRPPS. The chain crosses the membrane as a helical span at residues 1000 to 1020; that stretch reads GLISGALLFSVLSQIIICIGF. Residues 1021–1073 lie on the Lumenal side of the membrane; it reads QSLGFFWVKQQPWYEVWHPKSDACNTTGSGFWNSSHVDNETELDEHNIQNYEN. The chain crosses the membrane as a helical span at residues 1074–1094; the sequence is TTVFFISSFQYLIVAIAFSKG. At 1095–1105 the chain is on the cytoplasmic side; sequence KPFRQPCYKNY. The chain crosses the membrane as a helical span at residues 1106–1126; it reads FFVFSVIFLYIFILFIMLYPV. At 1127–1143 the chain is on the lumenal side; sequence ASVDQVLQIVCVPYQWR. Residues 1144 to 1164 traverse the membrane as a helical segment; the sequence is VTMLIIVLVNAFVSITVEESV. The Cytoplasmic segment spans residues 1165–1226; that stretch reads DRWGKCCLPW…NGSCQIITIT (62 aa).

It belongs to the cation transport ATPase (P-type) (TC 3.A.3) family. Type V subfamily. As to expression, broadly expressed.

It is found in the recycling endosome membrane. The protein localises to the early endosome membrane. Its subcellular location is the late endosome membrane. The enzyme catalyses putrescine(out) + ATP + H2O = putrescine(in) + ADP + phosphate + H(+). Functionally, ATP-driven pump involved in endocytosis-dependent polyamine transport. Uses ATP as an energy source to transfer polyamine precursor putrescine from the endosomal compartment to the cytosol. The polypeptide is Polyamine-transporting ATPase 13A3 (Homo sapiens (Human)).